Consider the following 80-residue polypeptide: SPbeta prophage-derived thioredoxin-like protein YosR (80 aa).

The region spanning 1-80 (MRLIKLEQPN…ELDELLKELR (80 aa)) is the Thioredoxin domain. C11 and C14 form a disulfide bridge.

Belongs to the thioredoxin family.

This Bacillus subtilis (strain 168) protein is SPbeta prophage-derived thioredoxin-like protein YosR (yosR).